A 132-amino-acid chain; its full sequence is UPF0251 protein PTH_0588 (132 aa).

This sequence belongs to the UPF0251 family.

In Pelotomaculum thermopropionicum (strain DSM 13744 / JCM 10971 / SI), this protein is UPF0251 protein PTH_0588.